The primary structure comprises 64 residues: Small, acid-soluble spore protein D (64 aa).

The protein belongs to the alpha/beta-type SASP family.

Functionally, SASP are bound to spore DNA. They are double-stranded DNA-binding proteins that cause DNA to change to an a-like conformation. They protect the DNA backbone from chemical and enzymatic cleavage and are thus involved in dormant spore's high resistance to UV light. The protein is Small, acid-soluble spore protein D (sspD) of Bacillus subtilis (strain 168).